Reading from the N-terminus, the 73-residue chain is Translation initiation factor IF-1 (73 aa).

The S1-like domain occupies Met1–Gln72.

Belongs to the IF-1 family. Component of the 30S ribosomal translation pre-initiation complex which assembles on the 30S ribosome in the order IF-2 and IF-3, IF-1 and N-formylmethionyl-tRNA(fMet); mRNA recruitment can occur at any time during PIC assembly.

It is found in the cytoplasm. Functionally, one of the essential components for the initiation of protein synthesis. Stabilizes the binding of IF-2 and IF-3 on the 30S subunit to which N-formylmethionyl-tRNA(fMet) subsequently binds. Helps modulate mRNA selection, yielding the 30S pre-initiation complex (PIC). Upon addition of the 50S ribosomal subunit IF-1, IF-2 and IF-3 are released leaving the mature 70S translation initiation complex. In Rickettsia bellii (strain OSU 85-389), this protein is Translation initiation factor IF-1.